Here is a 91-residue protein sequence, read N- to C-terminus: Small ribosomal subunit protein uS19 (91 aa).

Belongs to the universal ribosomal protein uS19 family.

In terms of biological role, protein S19 forms a complex with S13 that binds strongly to the 16S ribosomal RNA. In Parasynechococcus marenigrum (strain WH8102), this protein is Small ribosomal subunit protein uS19.